We begin with the raw amino-acid sequence, 347 residues long: UDP-glucose 4-epimerase (347 aa).

Residues 11-13, 32-36, 65-66, phenylalanine 87, and lysine 91 each bind NAD(+); these read GYI, DNFHN, and DI. 131–133 serves as a coordination point for substrate; the sequence is SAT. Tyrosine 156 serves as the catalytic Proton acceptor. NAD(+) is bound by residues lysine 160 and tyrosine 184. Substrate is bound by residues 184–186, 205–207, 223–225, arginine 238, and 299–302; these read YFN, NNL, NVF, and REGD.

This sequence belongs to the NAD(P)-dependent epimerase/dehydratase family. Homodimer. It depends on NAD(+) as a cofactor.

The enzyme catalyses UDP-alpha-D-glucose = UDP-alpha-D-galactose. It carries out the reaction UDP-N-acetyl-alpha-D-glucosamine = UDP-N-acetyl-alpha-D-galactosamine. It participates in carbohydrate metabolism; galactose metabolism. Functionally, catalyzes two distinct but analogous reactions: the reversible epimerization of UDP-glucose to UDP-galactose and the reversible epimerization of UDP-N-acetylglucosamine to UDP-N-acetylgalactosamine. The reaction with UDP-Gal plays a critical role in the Leloir pathway of galactose catabolism in which galactose is converted to the glycolytic intermediate glucose 6-phosphate. It contributes to the catabolism of dietary galactose and enables the endogenous biosynthesis of both UDP-Gal and UDP-GalNAc when exogenous sources are limited. Both UDP-sugar interconversions are important in the synthesis of glycoproteins and glycolipids. The protein is UDP-glucose 4-epimerase (Gale) of Mus musculus (Mouse).